The chain runs to 536 residues: 3',5'-cyclic-AMP phosphodiesterase 4C (536 aa).

Positions 49–69 are disordered; it reads QALLGTPPQSSQQAAPAEESG. Positions 178-507 constitute a PDEase domain; the sequence is VQTDQEEQLA…EWYQSRVPCS (330 aa). The Proton donor role is filled by His254. His254 lines the 3',5'-cyclic AMP pocket. Residues His254 and His258 each contribute to the AMP site. Zn(2+) contacts are provided by His258, His294, Asp295, and Asp412. 4 residues coordinate AMP: Asp295, Asp412, Gln463, and Phe466. Asp295 lines the Mg(2+) pocket. Asp295 provides a ligand contact to Mn(2+). 2 residues coordinate 3',5'-cyclic AMP: Gln463 and Phe466. A Phosphoserine modification is found at Ser507.

This sequence belongs to the cyclic nucleotide phosphodiesterase family. PDE4 subfamily. As to quaternary structure, part of a complex containing AKAP5, ADCY5, ADCY6 and PKD2. It depends on Zn(2+) as a cofactor. The cofactor is Mg(2+). Requires Mn(2+) as cofactor.

The protein localises to the cell projection. It is found in the cilium. It catalyses the reaction 3',5'-cyclic AMP + H2O = AMP + H(+). It functions in the pathway purine metabolism; 3',5'-cyclic AMP degradation; AMP from 3',5'-cyclic AMP: step 1/1. Its function is as follows. Hydrolyzes the second messenger cAMP, which is a key regulator of many important physiological processes. This Rattus norvegicus (Rat) protein is 3',5'-cyclic-AMP phosphodiesterase 4C.